The primary structure comprises 438 residues: GDP-mannose 6-dehydrogenase (438 aa).

NAD(+) contacts are provided by Tyr10, Val11, Asp30, Lys35, Thr86, and Thr124. Residues Glu161, Lys210, Asn214, His217, Asn225, Tyr256, Tyr257, Arg259, Phe262, and Gly265 each contribute to the GDP-alpha-D-mannuronate site. Cys268 is an active-site residue. Lys271 lines the NAD(+) pocket. Position 324 (Lys324) interacts with GDP-alpha-D-mannuronate. Residue Arg331 participates in NAD(+) binding.

It belongs to the UDP-glucose/GDP-mannose dehydrogenase family.

The enzyme catalyses GDP-alpha-D-mannose + 2 NAD(+) + H2O = GDP-alpha-D-mannuronate + 2 NADH + 3 H(+). The protein operates within glycan biosynthesis; alginate biosynthesis. Functionally, catalyzes the oxidation of guanosine diphospho-D-mannose (GDP-D-mannose) to GDP-D-mannuronic acid, a precursor for alginate polymerization. The alginate layer causes a mucoid phenotype and provides a protective barrier against host immune defenses and antibiotics. The chain is GDP-mannose 6-dehydrogenase (algD) from Pseudomonas syringae pv. tomato (strain ATCC BAA-871 / DC3000).